We begin with the raw amino-acid sequence, 171 residues long: MAEEYSWDSYLNDRLLATNQVSGAGLASEEDGVVYACVAQGEESDPNFDKWSLFYKEDYDIEVEDENGTKTTKTINEGQTILVVFNEGYAPDGVWLGGTKYQFINIERDLEFEGYNFDVATCAKLKGGLHLVKVPGGNILVVLYDEEKEQDRGNSKIAALTFAKELAESSQ.

A pro-rich sequence-binding region spans residues 5–10 (YSWDSY). Positions 48-54 (FDKWSLF) match the Plasmodium-specific profilin mini-domain motif. Actin-binding stretches follow at residues 100–112 (KYQFINIERDLEF) and 152–156 (RGNSK).

Belongs to the profilin family. In terms of assembly, binds actin.

The protein resides in the cytoplasm. The protein localises to the cytoskeleton. Essential for the invasive blood stages of the parasite. Binds to proline rich sequences in various regulatory formin-like proteins and also to membrane phospholipids. Binds to actin and affects the structure of the cytoskeleton. Weakly sequesters actin monomers. In Plasmodium falciparum (isolate 3D7), this protein is Profilin.